Here is a 415-residue protein sequence, read N- to C-terminus: Protein CDC73 homolog (415 aa).

The protein belongs to the CDC73 family. As to quaternary structure, component of the nuclear PAF1 complex (PAF1C), which consists of VIP2/ELF7/PAF1, VIP3/SKI8/WDR61, VIP4/LEO1, VIP5/RTF1, VIP6/ELF8/CTR9 and CDC73. Expressed in root tips, shoot apex, young leaves and flowers, especially in stamen filaments and carpels.

It localises to the nucleus. Component of the PAF1 complex (PAF1C) which is involved in histone modifications such as methylation on histone H3 'Lys-4' (H3K4me3). Involved in regulation of flowering time. Required for the expression of the flowering repressors FLC and MADS-box genes of the MAF family. Required for histone H3 trimethylation on 'Lys-4' (H3K4me3) at the FLC locus. Prevents trimethylation on 'Lys-27' (H3K27me3) at the same locus. This Arabidopsis thaliana (Mouse-ear cress) protein is Protein CDC73 homolog.